Consider the following 233-residue polypeptide: Small ribosomal subunit protein uS2 (233 aa).

This sequence belongs to the universal ribosomal protein uS2 family.

In Clostridium novyi (strain NT), this protein is Small ribosomal subunit protein uS2.